A 223-amino-acid polypeptide reads, in one-letter code: Ribose-5-phosphate isomerase A (223 aa).

Residues 32-35, 83-86, and 96-99 each bind substrate; these read TGST, DGAD, and KGGG. The active-site Proton acceptor is E105. K123 is a binding site for substrate.

Belongs to the ribose 5-phosphate isomerase family. In terms of assembly, homodimer.

The catalysed reaction is aldehydo-D-ribose 5-phosphate = D-ribulose 5-phosphate. The protein operates within carbohydrate degradation; pentose phosphate pathway; D-ribose 5-phosphate from D-ribulose 5-phosphate (non-oxidative stage): step 1/1. In terms of biological role, catalyzes the reversible conversion of ribose-5-phosphate to ribulose 5-phosphate. The sequence is that of Ribose-5-phosphate isomerase A from Acinetobacter baumannii (strain SDF).